The following is a 158-amino-acid chain: UPF0145 protein Psyc_1853 (158 aa).

The span at 113–122 (IYQSSNQPPS) shows a compositional bias: polar residues. The tract at residues 113–158 (IYQSSNQPPSHHSGHSQYEEPVPSAAQPSTTAQANDDLPRFNPFGE) is disordered.

This sequence belongs to the UPF0145 family.

The polypeptide is UPF0145 protein Psyc_1853 (Psychrobacter arcticus (strain DSM 17307 / VKM B-2377 / 273-4)).